A 1011-amino-acid chain; its full sequence is Protein translocase subunit SecA, chloroplastic (1011 aa).

Residues 1–17 (MATSSLCSSFTSQTCNP) show a composition bias toward polar residues. Residues 1–22 (MATSSLCSSFTSQTCNPHSRPH) are disordered. The N-terminal 59 residues, 1–59 (MATSSLCSSFTSQTCNPHSRPHRKTLTLPGSVFLCRQFHLNSPSVSKTRRIRTRQSGPV), are a transit peptide targeting the chloroplast. Residue 164 to 171 (MRTGEGKT) participates in ATP binding. A disordered region spans residues 976–1011 (QDKMENQKSGKRNARPPTDTNPDPVGTVEPSTSASS).

This sequence belongs to the SecA family.

The protein localises to the plastid. It localises to the chloroplast stroma. Its subcellular location is the chloroplast thylakoid membrane. The catalysed reaction is ATP + H2O + chloroplast-proteinSide 1 = ADP + phosphate + chloroplast-proteinSide 2.. In terms of biological role, has a central role in coupling the hydrolysis of ATP to the transfer of proteins across the thylakoid membrane. Facilitates the transport of precursor proteins from the chloroplast stroma to thylakoid lumen. This chain is Protein translocase subunit SecA, chloroplastic, found in Pisum sativum (Garden pea).